We begin with the raw amino-acid sequence, 296 residues long: Nitrogenase iron protein 1 (296 aa).

11–18 (GKGGIGKS) serves as a coordination point for ATP. Cysteine 99 is a binding site for [4Fe-4S] cluster. Arginine 102 carries the ADP-ribosylarginine; by dinitrogenase reductase ADP-ribosyltransferase modification. Cysteine 133 is a binding site for [4Fe-4S] cluster.

The protein belongs to the NifH/BchL/ChlL family. In terms of assembly, homodimer. [4Fe-4S] cluster is required as a cofactor. The reversible ADP-ribosylation of Arg-102 inactivates the nitrogenase reductase and regulates nitrogenase activity.

The catalysed reaction is N2 + 8 reduced [2Fe-2S]-[ferredoxin] + 16 ATP + 16 H2O = H2 + 8 oxidized [2Fe-2S]-[ferredoxin] + 2 NH4(+) + 16 ADP + 16 phosphate + 6 H(+). The key enzymatic reactions in nitrogen fixation are catalyzed by the nitrogenase complex, which has 2 components: the iron protein and the molybdenum-iron protein. The protein is Nitrogenase iron protein 1 (nifH1) of Azorhizobium caulinodans (strain ATCC 43989 / DSM 5975 / JCM 20966 / LMG 6465 / NBRC 14845 / NCIMB 13405 / ORS 571).